Reading from the N-terminus, the 410-residue chain is Diguanylate cyclase DgcM (410 aa).

2 consecutive PAS domains span residues 3–70 and 129–198; these read THNF…NQHD and GFYA…HLPG. Residues 199-251 enclose the PAC domain; that stretch reads GHKPLNFVHKLADGSTRHVQTYAGPIEIYGDKLMLCIVHDITEQKRLEEQLEH. The region spanning 283 to 410 is the GGDEF domain; the sequence is QDYSLLLIDT…NDGRNRVLAA (128 aa). Aspartate 291 serves as a coordination point for Mg(2+). Asparagine 299, histidine 304, and aspartate 308 together coordinate substrate. Glutamate 334 contacts Mg(2+). Glutamate 334 functions as the Proton acceptor in the catalytic mechanism.

In terms of assembly, forms homodimers and homotetramers. Interacts with PdeR and MlrA. Mg(2+) serves as cofactor.

The catalysed reaction is 2 GTP = 3',3'-c-di-GMP + 2 diphosphate. The protein operates within purine metabolism; 3',5'-cyclic di-GMP biosynthesis. With respect to regulation, activity is inhibited by the phosphodiesterase PdeR. Inhibition is relieved by high cellular c-di-GMP levels. Part of a signaling cascade that regulates curli biosynthesis. The cascade is composed of two cyclic-di-GMP (c-di-GMP) control modules, in which c-di-GMP controlled by the DgcE/PdeH pair (module I) regulates the activity of the DgcM/PdeR pair (module II), which in turn regulates activity of the transcription factor MlrA and expression of the master biofilm regulator csgD. DgcM stimulates activity of MlrA by direct interaction, leading to the transcription of csgD. It also catalyzes the synthesis of c-di-GMP via the condensation of 2 GTP molecules, which contributes to the c-di-GMP pool generated by module I in a positive feedback loop. Production of c-di-GMP contributes to but is not essential for MlrA activation. The polypeptide is Diguanylate cyclase DgcM (Escherichia coli (strain K12)).